Here is a 789-residue protein sequence, read N- to C-terminus: Glycerol-3-phosphate acyltransferase (789 aa).

The HXXXXD motif signature appears at 276–281 (HRSYID).

Belongs to the GPAT/DAPAT family.

The protein localises to the cell membrane. The catalysed reaction is sn-glycerol 3-phosphate + an acyl-CoA = a 1-acyl-sn-glycero-3-phosphate + CoA. The protein operates within phospholipid metabolism; CDP-diacylglycerol biosynthesis; CDP-diacylglycerol from sn-glycerol 3-phosphate: step 1/3. The sequence is that of Glycerol-3-phosphate acyltransferase from Mycobacterium bovis (strain ATCC BAA-935 / AF2122/97).